Reading from the N-terminus, the 47-residue chain is Delta-stichotoxin-Hcr1d (47 aa).

Disulfide bonds link C3–C43, C5–C33, and C26–C44.

It belongs to the sea anemone sodium channel inhibitory toxin family. Type II subfamily.

It is found in the secreted. Its subcellular location is the nematocyst. Its function is as follows. Binds to site 3 of voltage-gated sodium channels and inhibits the inactivation process. This is Delta-stichotoxin-Hcr1d from Radianthus crispa (Leathery sea anemone).